The chain runs to 184 residues: UPF0398 protein BCAH820_1652 (184 aa).

The protein belongs to the UPF0398 family.

This chain is UPF0398 protein BCAH820_1652, found in Bacillus cereus (strain AH820).